We begin with the raw amino-acid sequence, 480 residues long: LETM1 domain-containing protein LETM2, mitochondrial (480 aa).

Residues M1 to S25 constitute a mitochondrion transit peptide. At C26–R175 the chain is on the mitochondrial intermembrane side. Residues G88–R118 are disordered. Over residues K107–R118 the composition is skewed to basic and acidic residues. The chain crosses the membrane as a helical span at residues L176–L196. At K197 to A480 the chain is on the mitochondrial matrix side. Positions K219–D436 constitute a Letm1 RBD domain. Residues E398–P444 form a disordered region.

Its subcellular location is the mitochondrion inner membrane. In Mus musculus (Mouse), this protein is LETM1 domain-containing protein LETM2, mitochondrial (Letm2).